We begin with the raw amino-acid sequence, 366 residues long: Alanine racemase (366 aa).

Catalysis depends on Lys33, which acts as the Proton acceptor; specific for D-alanine. An N6-(pyridoxal phosphate)lysine modification is found at Lys33. Residue Arg129 coordinates substrate. Catalysis depends on Tyr253, which acts as the Proton acceptor; specific for L-alanine. Met301 contributes to the substrate binding site.

The protein belongs to the alanine racemase family. Pyridoxal 5'-phosphate is required as a cofactor.

The enzyme catalyses L-alanine = D-alanine. It participates in amino-acid biosynthesis; D-alanine biosynthesis; D-alanine from L-alanine: step 1/1. Catalyzes the interconversion of L-alanine and D-alanine. May also act on other amino acids. The polypeptide is Alanine racemase (alr) (Xanthomonas oryzae pv. oryzae (strain KACC10331 / KXO85)).